A 286-amino-acid polypeptide reads, in one-letter code: Protein METABOLIC NETWORK MODULATOR 1 (286 aa).

The span at 1-10 (MEKESHEENN) shows a compositional bias: basic and acidic residues. Disordered regions lie at residues 1-60 (MEKE…DDEA), 123-146 (VMHH…GSGV), and 181-204 (GGER…SGAS). Positions 20–29 (KRKRGRPRKQ) are enriched in basic residues. The span at 30-39 (LKLESNEHSL) shows a compositional bias: basic and acidic residues. A compositionally biased stretch (basic residues) spans 131–140 (KRGRKSRFRE). Over residues 191–204 (PMQTETGSQASGAS) the composition is skewed to polar residues.

As to expression, mailny observed in young seedlings and in emerging leaves.

Functionally, lineage-specific modulator of primary metabolism. Influences flowering time. The chain is Protein METABOLIC NETWORK MODULATOR 1 from Arabidopsis thaliana (Mouse-ear cress).